Consider the following 299-residue polypeptide: Taste receptor type 2 member 5 (299 aa).

Residue methionine 1 is a topological domain, extracellular. A helical transmembrane segment spans residues leucine 2–isoleucine 22. Residues glycine 23–asparagine 45 are Cytoplasmic-facing. A helical transmembrane segment spans residues leucine 46–leucine 66. Over serine 67 to serine 82 the chain is Extracellular. The chain crosses the membrane as a helical span at residues isoleucine 83–tyrosine 103. Topologically, residues cysteine 104 to leucine 127 are cytoplasmic. The helical transmembrane segment at tryptophan 128–phenylalanine 148 threads the bilayer. The Extracellular portion of the chain corresponds to tyrosine 149 to serine 175. A glycan (N-linked (GlcNAc...) asparagine) is linked at asparagine 155. The helical transmembrane segment at glycine 176 to tyrosine 196 threads the bilayer. At threonine 197–serine 223 the chain is on the cytoplasmic side. Residues leucine 224–serine 244 form a helical membrane-spanning segment. Residues lysine 245–serine 253 lie on the Extracellular side of the membrane. The chain crosses the membrane as a helical span at residues valine 254–methionine 274. Over glycine 275 to proline 299 the chain is Cytoplasmic.

It belongs to the G-protein coupled receptor T2R family.

It is found in the membrane. In terms of biological role, receptor that may play a role in the perception of bitterness and is gustducin-linked. May play a role in sensing the chemical composition of the gastrointestinal content. The activity of this receptor may stimulate alpha gustducin, mediate PLC-beta-2 activation and lead to the gating of TRPM5. The polypeptide is Taste receptor type 2 member 5 (TAS2R5) (Pan paniscus (Pygmy chimpanzee)).